The following is a 323-amino-acid chain: Glyoxylate/hydroxypyruvate reductase B (323 aa).

Catalysis depends on residues R237 and E266. H285 serves as the catalytic Proton donor.

It belongs to the D-isomer specific 2-hydroxyacid dehydrogenase family. GhrB subfamily. In terms of assembly, homodimer.

It is found in the cytoplasm. The enzyme catalyses glycolate + NADP(+) = glyoxylate + NADPH + H(+). It catalyses the reaction (R)-glycerate + NAD(+) = 3-hydroxypyruvate + NADH + H(+). It carries out the reaction (R)-glycerate + NADP(+) = 3-hydroxypyruvate + NADPH + H(+). In terms of biological role, catalyzes the NADPH-dependent reduction of glyoxylate and hydroxypyruvate into glycolate and glycerate, respectively. The protein is Glyoxylate/hydroxypyruvate reductase B of Klebsiella pneumoniae subsp. pneumoniae (strain ATCC 700721 / MGH 78578).